The sequence spans 256 residues: uncharacterized protein (256 aa).

Residues 213–243 (TMSMEAKLEAAKKTLEKFKQEAASKRAKRTK) are a coiled coil. The interval 231–256 (KQEAASKRAKRTKPSGSKTTRSTGRK) is disordered. Over residues 244-256 (PSGSKTTRSTGRK) the composition is skewed to polar residues.

This is an uncharacterized protein from Acanthamoeba polyphaga (Amoeba).